Reading from the N-terminus, the 389-residue chain is PqqA peptide cyclase (389 aa).

One can recognise a Radical SAM core domain in the interval 19 to 234 (VGLPLWLLAE…TNEYRDQLAA (216 aa)). [4Fe-4S] cluster is bound by residues cysteine 33, cysteine 37, and cysteine 40.

The protein belongs to the radical SAM superfamily. PqqE family. As to quaternary structure, interacts with PqqD. The interaction is necessary for activity of PqqE. It depends on [4Fe-4S] cluster as a cofactor.

The catalysed reaction is [PQQ precursor protein] + S-adenosyl-L-methionine = E-Y cross-linked-[PQQ precursor protein] + 5'-deoxyadenosine + L-methionine + H(+). It participates in cofactor biosynthesis; pyrroloquinoline quinone biosynthesis. Catalyzes the cross-linking of a glutamate residue and a tyrosine residue in the PqqA protein as part of the biosynthesis of pyrroloquinoline quinone (PQQ). The sequence is that of PqqA peptide cyclase from Pseudomonas syringae pv. tomato (strain ATCC BAA-871 / DC3000).